The sequence spans 273 residues: Ribosomal RNA small subunit methyltransferase A (273 aa).

Positions 18, 20, 45, 66, 91, and 113 each coordinate S-adenosyl-L-methionine.

Belongs to the class I-like SAM-binding methyltransferase superfamily. rRNA adenine N(6)-methyltransferase family. RsmA subfamily.

The protein resides in the cytoplasm. It carries out the reaction adenosine(1518)/adenosine(1519) in 16S rRNA + 4 S-adenosyl-L-methionine = N(6)-dimethyladenosine(1518)/N(6)-dimethyladenosine(1519) in 16S rRNA + 4 S-adenosyl-L-homocysteine + 4 H(+). Specifically dimethylates two adjacent adenosines (A1518 and A1519) in the loop of a conserved hairpin near the 3'-end of 16S rRNA in the 30S particle. May play a critical role in biogenesis of 30S subunits. The chain is Ribosomal RNA small subunit methyltransferase A from Salmonella choleraesuis (strain SC-B67).